A 336-amino-acid polypeptide reads, in one-letter code: Biotin synthase (336 aa).

A Radical SAM core domain is found at 54 to 281 (QAIQLSTLLS…KSYVRLSAGR (228 aa)). Residues Cys69, Cys73, and Cys76 each contribute to the [4Fe-4S] cluster site. 4 residues coordinate [2Fe-2S] cluster: Cys113, Cys144, Cys204, and Arg276.

This sequence belongs to the radical SAM superfamily. Biotin synthase family. As to quaternary structure, homodimer. The cofactor is [4Fe-4S] cluster. It depends on [2Fe-2S] cluster as a cofactor.

It catalyses the reaction (4R,5S)-dethiobiotin + (sulfur carrier)-SH + 2 reduced [2Fe-2S]-[ferredoxin] + 2 S-adenosyl-L-methionine = (sulfur carrier)-H + biotin + 2 5'-deoxyadenosine + 2 L-methionine + 2 oxidized [2Fe-2S]-[ferredoxin]. Its pathway is cofactor biosynthesis; biotin biosynthesis; biotin from 7,8-diaminononanoate: step 2/2. In terms of biological role, catalyzes the conversion of dethiobiotin (DTB) to biotin by the insertion of a sulfur atom into dethiobiotin via a radical-based mechanism. The chain is Biotin synthase from Actinobacillus pleuropneumoniae serotype 7 (strain AP76).